Consider the following 489-residue polypeptide: Ribulose bisphosphate carboxylase large chain (489 aa).

N128 and T178 together coordinate substrate. Catalysis depends on K180, which acts as the Proton acceptor. K182 provides a ligand contact to substrate. Positions 206, 208, and 209 each coordinate Mg(2+). K206 carries the post-translational modification N6-carboxylysine. The active-site Proton acceptor is the H298. Positions 299, 331, and 383 each coordinate substrate.

Belongs to the RuBisCO large chain family. Type I subfamily. Heterohexadecamer of 8 large chains and 8 small chains. The cofactor is Mg(2+).

It carries out the reaction 2 (2R)-3-phosphoglycerate + 2 H(+) = D-ribulose 1,5-bisphosphate + CO2 + H2O. It catalyses the reaction D-ribulose 1,5-bisphosphate + O2 = 2-phosphoglycolate + (2R)-3-phosphoglycerate + 2 H(+). RuBisCO catalyzes two reactions: the carboxylation of D-ribulose 1,5-bisphosphate, the primary event in carbon dioxide fixation, as well as the oxidative fragmentation of the pentose substrate. Both reactions occur simultaneously and in competition at the same active site. The protein is Ribulose bisphosphate carboxylase large chain of Nitrosospira multiformis (strain ATCC 25196 / NCIMB 11849 / C 71).